Here is a 667-residue protein sequence, read N- to C-terminus: DNA ligase (667 aa).

NAD(+)-binding positions include 32–36 (DSEYD), 81–82 (SL), and Glu-110. The active-site N6-AMP-lysine intermediate is the Lys-112. NAD(+)-binding residues include Arg-133, Glu-167, Lys-283, and Lys-307. Positions 401, 404, 419, and 424 each coordinate Zn(2+). Residues 586–667 (EGHPDFKDKT…FVQKQNEIEG (82 aa)) form the BRCT domain.

This sequence belongs to the NAD-dependent DNA ligase family. LigA subfamily. The cofactor is Mg(2+). Mn(2+) serves as cofactor.

The catalysed reaction is NAD(+) + (deoxyribonucleotide)n-3'-hydroxyl + 5'-phospho-(deoxyribonucleotide)m = (deoxyribonucleotide)n+m + AMP + beta-nicotinamide D-nucleotide.. Its function is as follows. DNA ligase that catalyzes the formation of phosphodiester linkages between 5'-phosphoryl and 3'-hydroxyl groups in double-stranded DNA using NAD as a coenzyme and as the energy source for the reaction. It is essential for DNA replication and repair of damaged DNA. The protein is DNA ligase of Staphylococcus saprophyticus subsp. saprophyticus (strain ATCC 15305 / DSM 20229 / NCIMB 8711 / NCTC 7292 / S-41).